The sequence spans 108 residues: Thioredoxin (108 aa).

One can recognise a Thioredoxin domain in the interval 2–108 (SDAILYVSDD…QLTAFLDSQL (107 aa)). Cysteine 33 and cysteine 36 are oxidised to a cystine.

Belongs to the thioredoxin family.

Functionally, component of the thioredoxin-thioredoxin reductase system. Participates in various redox reactions through the reversible oxidation of its active center dithiol to a disulfide and catalyzes dithiol-disulfide exchange reactions. In Acidithiobacillus ferridurans, this protein is Thioredoxin (trxA).